A 63-amino-acid chain; its full sequence is Large ribosomal subunit protein bL28 (63 aa).

The protein belongs to the bacterial ribosomal protein bL28 family.

The protein is Large ribosomal subunit protein bL28 of Desulforudis audaxviator (strain MP104C).